Here is a 123-residue protein sequence, read N- to C-terminus: Small ribosomal subunit protein uS12 (123 aa).

At D89 the chain carries 3-methylthioaspartic acid.

It belongs to the universal ribosomal protein uS12 family. In terms of assembly, part of the 30S ribosomal subunit. Contacts proteins S8 and S17. May interact with IF1 in the 30S initiation complex.

With S4 and S5 plays an important role in translational accuracy. Functionally, interacts with and stabilizes bases of the 16S rRNA that are involved in tRNA selection in the A site and with the mRNA backbone. Located at the interface of the 30S and 50S subunits, it traverses the body of the 30S subunit contacting proteins on the other side and probably holding the rRNA structure together. The combined cluster of proteins S8, S12 and S17 appears to hold together the shoulder and platform of the 30S subunit. The protein is Small ribosomal subunit protein uS12 of Granulibacter bethesdensis (strain ATCC BAA-1260 / CGDNIH1).